We begin with the raw amino-acid sequence, 201 residues long: Calcium channel flower (201 aa).

3 helical membrane-spanning segments follow: residues 37-57 (LGIVGAFFAILFGLWNVLSII), 59-79 (LSVSCLVAGIIQMIAGFVVMA), and 103-120 (PMYFRAGLYCALAVPPIF).

Belongs to the calcium channel flower family. As to quaternary structure, homomultimer. Associates with the dally/ magu complex.

It is found in the cell membrane. The protein resides in the cytoplasmic vesicle. Its subcellular location is the secretory vesicle. It localises to the synaptic vesicle membrane. The protein localises to the presynaptic cell membrane. It is found in the endosome. With respect to regulation, channel activity is inhibited by La(3+), which reduces Ca(2+) influx and thus inhibits it's function in promoting activity-dependent bulk endocytosis (ADBE) in response to high stimuli. In terms of biological role, transmembrane protein which mediates synaptic endocytosis, fitness-based cell culling, neuronal culling, morphogen gradient scaling, and calcium transport. Regulates synaptic endocytosis and hence couples exo- with endocytosis. Controls two major modes of synaptic vesicle (SV) endocytosis in the synaptic boutons of neuromuscular junctions (NMJs); Ca(2+) channel-independent Clathrin-mediated endocytosis (CME) in response to mild stimulation, and Ca(2+) channel-dependent activity-dependent bulk endocytosis (ADBE) in response to strong stimulation. Functions in ADBE and subsequent SV reformation from bulk endosomes by initiating Ca(2+) channel-dependent phosphatidylinositol 4,5-bisphosphate (PtdIns(4,5)P2) compartmentalization in synaptic boutons. There it acts at the periactive zone to provide the low Ca(2+) levels required to initiate Calcineurin activation and upregulate PtdIns(4,5)P2. Conversely PtdIns(4,5)P2 enhances fwe Ca(2+) channel-activity, establishing a positive feedback loop that induces PtdIns(4,5)P2 microdomain at the periactive zone. These microdomains trigger bulk membrane invagination (i.e. ADBE) by triggering actin polymerization while also promoting localization of fwe to bulk endosomes, thereby removing the ADBE trigger to reduce endocytosis and prevent excess membrane uptake. PtdIns(4,5)P2 then promotes SV reformation from the bulk endosomes, to coordinate ADBE and subsequent SV reformation. Different combinations of the flower isoforms at the cell membrane are also required for the identification and elimination of suboptimal or supernumerary cells during development, regeneration, and adulthood. Required for the recognition and elimination of unfit cells in the developing wing during cell competition. In the developing pupal retina, mediates the elimination of unwanted postmitotic neurons, including supernumerary photoreceptor neurons that form at the periphery of the retina and are contained within incomplete ommatidia units. Also required for efficient elimination and replacement of old neurons by newly generated neurons during regeneration in the adult brain following mechanical injury. Downstream of the flower fitness fingerprints, cells identified as unwanted or unfit are eliminated via apoptosis through the expression of ahuizotl (azot). However, the cells marked for elimination by the flower isoforms only undergo apoptosis if additional thresholds are met; (1) their neighboring fit/healthy cells express different levels of the fwe isoforms, and (2) the levels of the protective signal SPARC expressed by the loser or unwanted cells are unable to inhibit caspase activation. These additional thresholds for flower-mediated apoptosis, allows useful cells to recover from transient and limited stress before they are unnecessarily eliminated. Functions with dally and magu in a mechanism of scaling, which utilises apoptosis to ensure that the dpp morphogen gradient, which mediates organ growth, remains proportional to the size of the growing wing. In this mechanism, fwe represses dally- and Magu-dependent activity in expanding the gradient, and dally/Magu inhibits fwe-dependent apoptosis to keep cell death rate low. When the levels of these different proteins are optimally regulated the gradient correctly scales with organ growth but when this fails, fwe-mediated apoptosis is activated to trim the developing tissue to match the correct size of the gradient. The protein is Calcium channel flower of Drosophila willistoni (Fruit fly).